The following is a 380-amino-acid chain: O-phospho-L-seryl-tRNA:Cys-tRNA synthase (380 aa).

Residues 86-87 (AR), Asn-192, and 215-217 (SGH) contribute to the pyridoxal 5'-phosphate site. Position 218 is an N6-(pyridoxal phosphate)lysine (Lys-218).

This sequence belongs to the SepCysS family. Homodimer. Interacts with SepRS. Pyridoxal 5'-phosphate is required as a cofactor.

It carries out the reaction O-phospho-L-seryl-tRNA(Cys) + hydrogen sulfide + H(+) = L-cysteinyl-tRNA(Cys) + phosphate. Converts O-phospho-L-seryl-tRNA(Cys) (Sep-tRNA(Cys)) to L-cysteinyl-tRNA(Cys) (Cys-tRNA(Cys)). This chain is O-phospho-L-seryl-tRNA:Cys-tRNA synthase, found in Methanococcus maripaludis (strain DSM 14266 / JCM 13030 / NBRC 101832 / S2 / LL).